We begin with the raw amino-acid sequence, 387 residues long: Phosphoglycerate kinase (387 aa).

Residues 21–23 (DLN), arginine 36, 59–62 (HLGR), arginine 113, and arginine 146 contribute to the substrate site. ATP is bound by residues lysine 197, glutamate 314, and 340-343 (GGDT).

This sequence belongs to the phosphoglycerate kinase family. Monomer.

It is found in the cytoplasm. It carries out the reaction (2R)-3-phosphoglycerate + ATP = (2R)-3-phospho-glyceroyl phosphate + ADP. Its pathway is carbohydrate degradation; glycolysis; pyruvate from D-glyceraldehyde 3-phosphate: step 2/5. The chain is Phosphoglycerate kinase from Pectobacterium atrosepticum (strain SCRI 1043 / ATCC BAA-672) (Erwinia carotovora subsp. atroseptica).